The chain runs to 470 residues: Poly(A) polymerase catalytic subunit (470 aa).

Residues D192 and D194 contribute to the active site.

Belongs to the poxviridae poly(A) polymerase catalytic subunit family. As to quaternary structure, heterodimer of a large (catalytic) subunit and a small (regulatory) subunit.

It catalyses the reaction RNA(n) + ATP = RNA(n)-3'-adenine ribonucleotide + diphosphate. In terms of biological role, polymerase that creates the 3'-poly(A) tail of mRNA's. The sequence is that of Poly(A) polymerase catalytic subunit (PAPL) from Deerpox virus (strain Mule deer/United States/W-848-83/1983) (DPV).